We begin with the raw amino-acid sequence, 227 residues long: Endo-1,4-beta-xylanase 1 (227 aa).

Residues 1-19 (MVSLKSVLAAATAVSSAIA) form the signal peptide. A GH11 domain is found at 37–225 (QVTPNAEGWH…SSGESDIYVQ (189 aa)). The Nucleophile role is filled by E121. E212 acts as the Proton donor in catalysis.

It belongs to the glycosyl hydrolase 11 (cellulase G) family.

The enzyme catalyses Endohydrolysis of (1-&gt;4)-beta-D-xylosidic linkages in xylans.. The protein operates within glycan degradation; xylan degradation. The polypeptide is Endo-1,4-beta-xylanase 1 (Humicola insolens (Soft-rot fungus)).